Consider the following 576-residue polypeptide: Carboxypeptidase S (576 aa).

Topologically, residues 1–19 (MIALPVEKAPRKSLWQRHR) are cytoplasmic. A Glycyl lysine isopeptide (Lys-Gly) (interchain with G-Cter in ubiquitin) cross-link involves residue K8. Residues 20-40 (AFISGIVALIIIGTFFLTSGL) traverse the membrane as a helical segment. The Lumenal portion of the chain corresponds to 41–576 (HPAPPHEAKR…EYIVNVNEYA (536 aa)). Residues 44-65 (PPHEAKRPHHGKGPMHSPKCEK) are disordered. N88 carries an N-linked (GlcNAc...) asparagine glycan. Residue H168 coordinates Zn(2+). D170 is a catalytic residue. N176 is a glycosylation site (N-linked (GlcNAc...) asparagine). Residue D205 coordinates Zn(2+). N-linked (GlcNAc...) asparagine glycosylation occurs at N228. E239 acts as the Proton acceptor in catalysis. Positions 240 and 268 each coordinate Zn(2+). Residues N381 and N525 are each glycosylated (N-linked (GlcNAc...) asparagine). H547 contacts Zn(2+).

The protein belongs to the peptidase M20A family. In terms of assembly, yscS is synthesized as one polypeptide chain precursor which after carbohydrate modification in the secretory pathway yields two active precursor molecules. The proteolytically unprocessed forms are associated with the membrane, whereas the mature forms of the enzyme are soluble. Zn(2+) serves as cofactor. In terms of processing, glycosylated. Ubiquitinated. Ubiquitination mediates sorting into internal vesicles in late endosomes. TUL1 is required for ubiquitination.

It localises to the vacuole membrane. It carries out the reaction Release of a C-terminal amino acid from a peptide in which glycine is the penultimate amino acid, e.g. Z-Gly-|-Leu.. Its function is as follows. Necessary for use of certain peptides as sole nitrogen source. May also cleave intracellularly generated peptides to recycle amino acids for protein synthesis. The chain is Carboxypeptidase S (CPS1) from Saccharomyces cerevisiae (strain ATCC 204508 / S288c) (Baker's yeast).